A 370-amino-acid polypeptide reads, in one-letter code: 3,7-dimethylxanthine N-methyltransferase CkTbS (370 aa).

Y24 lines the S-adenosyl-L-homocysteine pocket. T31 lines the theobromine pocket. S-adenosyl-L-homocysteine contacts are provided by C67, N72, D104, L105, S139, and F140. Theobromine is bound by residues Y157, H160, and W161. N178 lines the Mg(2+) pocket. H226 is a binding site for theobromine. D264, F266, and N267 together coordinate Mg(2+). Residue F322 participates in theobromine binding.

This sequence belongs to the methyltransferase superfamily. Type-7 methyltransferase family. It depends on Mg(2+) as a cofactor.

It catalyses the reaction 7-methylxanthine + S-adenosyl-L-methionine = theobromine + S-adenosyl-L-homocysteine + H(+). Its pathway is alkaloid biosynthesis. Involved in the biosynthesis of caffeine in cv. Puer. Involved in the biosynthesis of theacrine in cv. Kucha, a caffeine-like xanthine alkaloid with diverse beneficial biological activities including anti-depressive, sedative, and hypnotic activities, improving learning and memory, increasing exercise activity, and preventing nonalcoholic fatty liver disease. Catalyzes the conversion of 7-methylxanthine (7mX) to theobromine but not able to convert paraxanthine to caffeine. The chain is 3,7-dimethylxanthine N-methyltransferase CkTbS from Camellia sinensis var. assamica (Assam tea).